A 262-amino-acid polypeptide reads, in one-letter code: MMDMGHKNKIDIKVRLHNYIILYAKRCSMTVSSGNETLTIDEGQIAFIERNIQINVSIKKSDSINPFEIISLDRNLLLSIIRIMEPIYSFQHSYSEEKRGLNKKIFLLSEEEVSIDLFKSIKEMPFGKRKIYSLACLLSAVSDEEALYTSISIASSLSFSDQIRKIVEKNIEKRWRLSDISNNLNLSEIAVRKRLESEKLTFQQILLDIRMHHAAKLLLNSQSYINDVSRLIGISSPSYFIRKFNEYYGITPKKFYLYHKKF.

Residues 161 to 258 (DQIRKIVEKN…GITPKKFYLY (98 aa)) enclose the HTH araC/xylS-type domain. 2 DNA-binding regions (H-T-H motif) span residues 178 to 199 (SDIS…ESEK) and 225 to 248 (INDV…NEYY).

Homodimer.

Functionally, primary regulator of plasmid-encoded virulence genes. Activates the transcription of icsA (virG) and of virB, which is an activator of the ipaABCD virulence regulon. This is Virulence regulon transcriptional activator VirF (virF) from Shigella dysenteriae.